A 515-amino-acid chain; its full sequence is Ribose import ATP-binding protein RbsA 1 (515 aa).

2 ABC transporter domains span residues 8-244 (FQME…IGRE) and 256-503 (VPAT…LNIH). Residue 40–47 (GENGAGKS) participates in ATP binding.

The protein belongs to the ABC transporter superfamily. Ribose importer (TC 3.A.1.2.1) family. In terms of assembly, the complex is composed of an ATP-binding protein (RbsA), two transmembrane proteins (RbsC) and a solute-binding protein (RbsB).

It localises to the cell inner membrane. The catalysed reaction is D-ribose(out) + ATP + H2O = D-ribose(in) + ADP + phosphate + H(+). In terms of biological role, part of the ABC transporter complex RbsABC involved in ribose import. Responsible for energy coupling to the transport system. This is Ribose import ATP-binding protein RbsA 1 from Mesorhizobium japonicum (strain LMG 29417 / CECT 9101 / MAFF 303099) (Mesorhizobium loti (strain MAFF 303099)).